We begin with the raw amino-acid sequence, 364 residues long: Histidinol-phosphate aminotransferase (364 aa).

Lys-226 carries the N6-(pyridoxal phosphate)lysine modification.

The protein belongs to the class-II pyridoxal-phosphate-dependent aminotransferase family. Histidinol-phosphate aminotransferase subfamily. In terms of assembly, homodimer. Pyridoxal 5'-phosphate is required as a cofactor.

The enzyme catalyses L-histidinol phosphate + 2-oxoglutarate = 3-(imidazol-4-yl)-2-oxopropyl phosphate + L-glutamate. It participates in amino-acid biosynthesis; L-histidine biosynthesis; L-histidine from 5-phospho-alpha-D-ribose 1-diphosphate: step 7/9. This Campylobacter jejuni (strain RM1221) protein is Histidinol-phosphate aminotransferase.